We begin with the raw amino-acid sequence, 877 residues long: Phosphoenolpyruvate carboxylase (877 aa).

Residues His-137 and Lys-544 contribute to the active site.

Belongs to the PEPCase type 1 family. Requires Mg(2+) as cofactor.

It catalyses the reaction oxaloacetate + phosphate = phosphoenolpyruvate + hydrogencarbonate. Forms oxaloacetate, a four-carbon dicarboxylic acid source for the tricarboxylic acid cycle. The protein is Phosphoenolpyruvate carboxylase of Edwardsiella ictaluri (strain 93-146).